A 290-amino-acid polypeptide reads, in one-letter code: ATP synthase gamma chain (290 aa).

It belongs to the ATPase gamma chain family. As to quaternary structure, F-type ATPases have 2 components, CF(1) - the catalytic core - and CF(0) - the membrane proton channel. CF(1) has five subunits: alpha(3), beta(3), gamma(1), delta(1), epsilon(1). CF(0) has three main subunits: a, b and c.

The protein localises to the cell inner membrane. Its function is as follows. Produces ATP from ADP in the presence of a proton gradient across the membrane. The gamma chain is believed to be important in regulating ATPase activity and the flow of protons through the CF(0) complex. In Anaeromyxobacter dehalogenans (strain 2CP-1 / ATCC BAA-258), this protein is ATP synthase gamma chain.